We begin with the raw amino-acid sequence, 281 residues long: MKLAAMIKKMCPSDSELSIPAKNCYRMVILGSSKVGKTAIVSRFLTGRFEDAYTPTIEDFHRKFYSIRGEVYQLDILDTSGNHPFPAMRRLSILTGDVFILVFSLDNRDSFEEVQRLRQQILDTKSCLKNKTKENVDVPLVICGNKGDRDFYREVDQREIEQLVGDDPQRCAYFEISAKKNSSLDQMFRALFAMAKLPSEMSPDLHRKVSVQYCDVLHKKALRNKKLLRAGSGGGGGDPGDAFGIVAPFARRPSVHSDLMYIREKASAGSQAKDKERCVIS.

An S-nitrosocysteine modification is found at Cys-11. 31 to 38 (GSSKVGKT) contacts GTP. An Effector region motif is present at residues 53–61 (YTPTIEDFH). Residues 78–82 (DTSGN) and 145–148 (NKGD) contribute to the GTP site. Cys-278 bears the Cysteine methyl ester mark. Cys-278 carries the S-farnesyl cysteine lipid modification. Positions 279–281 (VIS) are cleaved as a propeptide — removed in mature form.

It belongs to the small GTPase superfamily. RasD family. In terms of assembly, forms a ternary complex with CAPON and NOS1. Component of a complex, at least composed of APBB1, RASD1/DEXRAS1 and APP. Interacts with APBB1/FE65. S-nitrosylation stimulates guanine-nucleotide exchange activity. In terms of tissue distribution, expressed in a variety of tissues including heart, cardiovascular tissues, brain, placenta, lung, liver, skeletal muscle, kidney, pancreas, gastrointestinal and reproductive tissues.

It is found in the cell membrane. The protein localises to the cytoplasm. The protein resides in the perinuclear region. Its subcellular location is the nucleus. Small GTPase. Negatively regulates the transcription regulation activity of the APBB1/FE65-APP complex via its interaction with APBB1/FE65. The sequence is that of Dexamethasone-induced Ras-related protein 1 (RASD1) from Homo sapiens (Human).